The chain runs to 761 residues: 3'-5' RNA nuclease TATDN2 (761 aa).

Disordered regions lie at residues 1-90 (MASE…HFLG), 135-181 (CSLK…LRDQ), 197-294 (KSMP…RRTV), 318-337 (KDRE…SDVE), 343-364 (RFSQ…SSFT), and 388-486 (SSPK…PKSH). Composition is skewed to low complexity over residues 33-52 (APSS…PSSP) and 66-85 (SRRL…SSFS). A compositionally biased stretch (basic and acidic residues) spans 247–294 (QKEKDATPEVSMEEDKTVPERSSFYDRRVVIDPQEKPSEEPLGDRRTV). Over residues 388-402 (SSPKPSSYPSTGSSS) the composition is skewed to low complexity. Residues 417–431 (SDYSPNSTGSVQNTS) show a composition bias toward polar residues. Residues 452–470 (RSSEEREVKEKRTFQEEMP) are compositionally biased toward basic and acidic residues. A divalent metal cation contacts are provided by histidine 499, histidine 501, glutamate 593, histidine 630, histidine 655, and aspartate 707.

The protein belongs to the metallo-dependent hydrolases superfamily. TatD-type hydrolase family. Mg(2+) is required as a cofactor.

It is found in the nucleus. Functionally, mg(2+)-dependent 3'RNA exonuclease and endonuclease that resolves R-loops via specific degradation of R-loop RNA stucture. Shows no activity against D-loop and minimal activity against the RNA strand of an RNA-DNA hybrid duplex oligomer. Has no 3' or 5' exonuclease activity, no uracil glycosylase activity, and no 5' flap endonuclease activity on DNA substrates. May have a role in maintaining genomic stability through its role in R-loop resolution. This is 3'-5' RNA nuclease TATDN2 (TATDN2) from Homo sapiens (Human).